We begin with the raw amino-acid sequence, 308 residues long: Protein translocase subunit SecF (308 aa).

6 consecutive transmembrane segments (helical) span residues 28-48, 140-160, 164-184, 194-214, 246-266, and 272-292; these read SIIL…NFGI, IEAG…YIWV, WYFG…ALGF, LSTI…SVVI, ILTV…GGEA, and VLVF…SAPI.

Belongs to the SecD/SecF family. SecF subfamily. In terms of assembly, forms a complex with SecD. Part of the essential Sec protein translocation apparatus which comprises SecA, SecYEG and auxiliary proteins SecDF-YajC and YidC.

It is found in the cell inner membrane. Its function is as follows. Part of the Sec protein translocase complex. Interacts with the SecYEG preprotein conducting channel. SecDF uses the proton motive force (PMF) to complete protein translocation after the ATP-dependent function of SecA. This chain is Protein translocase subunit SecF, found in Rickettsia conorii (strain ATCC VR-613 / Malish 7).